A 97-amino-acid polypeptide reads, in one-letter code: Co-chaperonin GroES (97 aa).

This sequence belongs to the GroES chaperonin family. In terms of assembly, heptamer of 7 subunits arranged in a ring. Interacts with the chaperonin GroEL.

The protein resides in the cytoplasm. Together with the chaperonin GroEL, plays an essential role in assisting protein folding. The GroEL-GroES system forms a nano-cage that allows encapsulation of the non-native substrate proteins and provides a physical environment optimized to promote and accelerate protein folding. GroES binds to the apical surface of the GroEL ring, thereby capping the opening of the GroEL channel. This Pseudomonas putida (strain ATCC 700007 / DSM 6899 / JCM 31910 / BCRC 17059 / LMG 24140 / F1) protein is Co-chaperonin GroES.